A 350-amino-acid polypeptide reads, in one-letter code: Nicotinate-nucleotide--dimethylbenzimidazole phosphoribosyltransferase (350 aa).

E317 serves as the catalytic Proton acceptor.

This sequence belongs to the CobT family.

The catalysed reaction is 5,6-dimethylbenzimidazole + nicotinate beta-D-ribonucleotide = alpha-ribazole 5'-phosphate + nicotinate + H(+). It functions in the pathway nucleoside biosynthesis; alpha-ribazole biosynthesis; alpha-ribazole from 5,6-dimethylbenzimidazole: step 1/2. Catalyzes the synthesis of alpha-ribazole-5'-phosphate from nicotinate mononucleotide (NAMN) and 5,6-dimethylbenzimidazole (DMB). This is Nicotinate-nucleotide--dimethylbenzimidazole phosphoribosyltransferase from Shewanella oneidensis (strain ATCC 700550 / JCM 31522 / CIP 106686 / LMG 19005 / NCIMB 14063 / MR-1).